The chain runs to 240 residues: Uridylate kinase (240 aa).

Residue 12–15 (KLSG) coordinates ATP. The tract at residues 20–25 (GDQGKG) is involved in allosteric activation by GTP. Residue G54 participates in UMP binding. ATP contacts are provided by G55 and R59. UMP-binding positions include D74 and 135 to 142 (TGSPYFST). ATP contacts are provided by N163, Y169, and D172.

It belongs to the UMP kinase family. Homohexamer.

The protein resides in the cytoplasm. The enzyme catalyses UMP + ATP = UDP + ADP. Its pathway is pyrimidine metabolism; CTP biosynthesis via de novo pathway; UDP from UMP (UMPK route): step 1/1. With respect to regulation, allosterically activated by GTP. Inhibited by UTP. In terms of biological role, catalyzes the reversible phosphorylation of UMP to UDP. The protein is Uridylate kinase of Ligilactobacillus salivarius (strain UCC118) (Lactobacillus salivarius).